Here is a 319-residue protein sequence, read N- to C-terminus: Thioredoxin reductase (319 aa).

FAD is bound by residues 11–14 (SGPA), 40–41 (VA), Q45, N54, V87, C145, D288, and 295–297 (RQA). A disulfide bond links C142 and C145.

This sequence belongs to the class-II pyridine nucleotide-disulfide oxidoreductase family. As to quaternary structure, homodimer. The cofactor is FAD.

The protein resides in the cytoplasm. It catalyses the reaction [thioredoxin]-dithiol + NADP(+) = [thioredoxin]-disulfide + NADPH + H(+). The sequence is that of Thioredoxin reductase (TRR1) from Eremothecium gossypii (strain ATCC 10895 / CBS 109.51 / FGSC 9923 / NRRL Y-1056) (Yeast).